A 336-amino-acid chain; its full sequence is Methionyl-tRNA formyltransferase (336 aa).

Position 110–113 (110–113) interacts with (6S)-5,6,7,8-tetrahydrofolate; it reads SLLP.

The protein belongs to the Fmt family.

It carries out the reaction L-methionyl-tRNA(fMet) + (6R)-10-formyltetrahydrofolate = N-formyl-L-methionyl-tRNA(fMet) + (6S)-5,6,7,8-tetrahydrofolate + H(+). In terms of biological role, attaches a formyl group to the free amino group of methionyl-tRNA(fMet). The formyl group appears to play a dual role in the initiator identity of N-formylmethionyl-tRNA by promoting its recognition by IF2 and preventing the misappropriation of this tRNA by the elongation apparatus. The chain is Methionyl-tRNA formyltransferase from Prochlorococcus marinus (strain NATL2A).